Here is a 334-residue protein sequence, read N- to C-terminus: L-lactate dehydrogenase B-B chain (334 aa).

NAD(+) contacts are provided by residues 30-58 (GQVGMACAVSVLLRELADELALVDVVEDK) and R100. Residues R107, N139, and R170 each coordinate substrate. N139 provides a ligand contact to NAD(+). The active-site Proton acceptor is H194. T249 serves as a coordination point for substrate.

This sequence belongs to the LDH/MDH superfamily. LDH family. In terms of assembly, homotetramer.

It is found in the cytoplasm. The enzyme catalyses (S)-lactate + NAD(+) = pyruvate + NADH + H(+). The protein operates within fermentation; pyruvate fermentation to lactate; (S)-lactate from pyruvate: step 1/1. This Danio rerio (Zebrafish) protein is L-lactate dehydrogenase B-B chain.